Reading from the N-terminus, the 242-residue chain is Anamorsin homolog (242 aa).

The interval 1-140 (MMNFADTLVI…NVTAENPDFL (140 aa)) is N-terminal SAM-like domain. The interval 141-162 (SNEDDDEGNSSDGEAYQNAEDN) is linker. [4Fe-4S] cluster-binding residues include Cys-205, Cys-208, Cys-216, and Cys-219. 2 short sequence motifs (cx2C motif) span residues 205 to 208 (CGNC) and 216 to 219 (CASC). A fe-S binding site B region spans residues 205–219 (CGNCYLGDAFRCASC).

Belongs to the anamorsin family. Monomer. The cofactor is [4Fe-4S] cluster.

The protein localises to the cytoplasm. It is found in the mitochondrion intermembrane space. Functionally, component of the cytosolic iron-sulfur (Fe-S) protein assembly (CIA) machinery. Required for the maturation of extramitochondrial Fe-S proteins. Part of an electron transfer chain functioning in an early step of cytosolic Fe-S biogenesis, facilitating the de novo assembly of a [4Fe-4S] cluster on the cytosolic Fe-S scaffold complex. Electrons are transferred from NADPH via a FAD- and FMN-containing diflavin oxidoreductase. Together with the diflavin oxidoreductase, also required for the assembly of the diferric tyrosyl radical cofactor of ribonucleotide reductase (RNR), probably by providing electrons for reduction during radical cofactor maturation in the catalytic small subunit. The chain is Anamorsin homolog from Plasmodium knowlesi (strain H).